Consider the following 180-residue polypeptide: Large ribosomal subunit protein uL5 (180 aa).

The protein belongs to the universal ribosomal protein uL5 family. In terms of assembly, part of the 50S ribosomal subunit; part of the 5S rRNA/L5/L18/L25 subcomplex. Contacts the 5S rRNA and the P site tRNA. Forms a bridge to the 30S subunit in the 70S ribosome.

This is one of the proteins that bind and probably mediate the attachment of the 5S RNA into the large ribosomal subunit, where it forms part of the central protuberance. In the 70S ribosome it contacts protein S13 of the 30S subunit (bridge B1b), connecting the 2 subunits; this bridge is implicated in subunit movement. Contacts the P site tRNA; the 5S rRNA and some of its associated proteins might help stabilize positioning of ribosome-bound tRNAs. This chain is Large ribosomal subunit protein uL5, found in Moorella thermoacetica (strain ATCC 39073 / JCM 9320).